A 30-amino-acid polypeptide reads, in one-letter code: ALKDEFEEHAEKAKTLPENTSNENKLILYG.

Residues 1–15 (ALKDEFEEHAEKAKT) show a composition bias toward basic and acidic residues. Positions 1 to 30 (ALKDEFEEHAEKAKTLPENTSNENKLILYG) are disordered. The region spanning 2-30 (LKDEFEEHAEKAKTLPENTSNENKLILYG) is the ACB domain.

It belongs to the ACBP family.

The protein localises to the cytoplasm. Its function is as follows. Binds medium- and long-chain acyl-CoA esters with very high affinity and may function as an intracellular carrier of acyl-CoA esters. This is Acyl-CoA-binding protein 1 from Digitalis lanata (Grecian foxglove).